Consider the following 259-residue polypeptide: Ribosomal RNA small subunit methyltransferase A (259 aa).

S-adenosyl-L-methionine-binding residues include Asn-13, Leu-15, Gly-40, Glu-61, Asp-85, and Asn-103.

It belongs to the class I-like SAM-binding methyltransferase superfamily. rRNA adenine N(6)-methyltransferase family. RsmA subfamily.

It is found in the cytoplasm. It carries out the reaction adenosine(1518)/adenosine(1519) in 16S rRNA + 4 S-adenosyl-L-methionine = N(6)-dimethyladenosine(1518)/N(6)-dimethyladenosine(1519) in 16S rRNA + 4 S-adenosyl-L-homocysteine + 4 H(+). In terms of biological role, specifically dimethylates two adjacent adenosines (A1518 and A1519) in the loop of a conserved hairpin near the 3'-end of 16S rRNA in the 30S particle. May play a critical role in biogenesis of 30S subunits. The polypeptide is Ribosomal RNA small subunit methyltransferase A (Neisseria meningitidis serogroup B (strain ATCC BAA-335 / MC58)).